Here is a 156-residue protein sequence, read N- to C-terminus: Small ribosomal subunit protein uS7 (156 aa).

It belongs to the universal ribosomal protein uS7 family. As to quaternary structure, part of the 30S ribosomal subunit. Contacts proteins S9 and S11.

Its function is as follows. One of the primary rRNA binding proteins, it binds directly to 16S rRNA where it nucleates assembly of the head domain of the 30S subunit. Is located at the subunit interface close to the decoding center, probably blocks exit of the E-site tRNA. This is Small ribosomal subunit protein uS7 from Dechloromonas aromatica (strain RCB).